Here is a 103-residue protein sequence, read N- to C-terminus: Matrix Gla protein (103 aa).

A signal peptide spans 1 to 19; it reads MKSLILLAILAALAVVTLC. Residue glutamate 21 is modified to 4-carboxyglutamate. Phosphoserine occurs at positions 22, 25, and 28. The Gla domain maps to 51 to 97; the sequence is RAKVQERIRERSKPVHELNREACDDYRLCERYAMVYGYNAAYNRYFR. Residues glutamate 56, glutamate 60, glutamate 67, and glutamate 71 each carry the 4-carboxyglutamate modification. Cysteine 73 and cysteine 79 are joined by a disulfide. A propeptide spans 97–103 (removed in mature form; probably by carboxypeptidase N); the sequence is RKRRGTK.

This sequence belongs to the osteocalcin/matrix Gla protein family. In terms of processing, requires vitamin K-dependent gamma-carboxylation for its function.

Its subcellular location is the secreted. Its function is as follows. Associates with the organic matrix of bone and cartilage. Thought to act as an inhibitor of bone formation. In Homo sapiens (Human), this protein is Matrix Gla protein (MGP).